The following is a 287-amino-acid chain: Shikimate dehydrogenase (NADP(+)) (287 aa).

Shikimate-binding positions include 18–20 and T66; that span reads SYS. K70 acts as the Proton acceptor in catalysis. Position 82 (E82) interacts with NADP(+). Residues N91 and D106 each coordinate shikimate. Residues 130-134 and M228 each bind NADP(+); that span reads GSGGA. Position 230 (Y230) interacts with shikimate. NADP(+) is bound at residue G251.

This sequence belongs to the shikimate dehydrogenase family. As to quaternary structure, homodimer.

It carries out the reaction shikimate + NADP(+) = 3-dehydroshikimate + NADPH + H(+). Its pathway is metabolic intermediate biosynthesis; chorismate biosynthesis; chorismate from D-erythrose 4-phosphate and phosphoenolpyruvate: step 4/7. Functionally, involved in the biosynthesis of the chorismate, which leads to the biosynthesis of aromatic amino acids. Catalyzes the reversible NADPH linked reduction of 3-dehydroshikimate (DHSA) to yield shikimate (SA). The protein is Shikimate dehydrogenase (NADP(+)) of Chlorobium chlorochromatii (strain CaD3).